The primary structure comprises 228 residues: Mediator of RNA polymerase II transcription subunit 7-B (228 aa).

The protein belongs to the Mediator complex subunit 7 family. In terms of assembly, component of the Mediator complex.

Its subcellular location is the nucleus. In terms of biological role, component of the Mediator complex, a coactivator involved in the regulated transcription of nearly all RNA polymerase II-dependent genes. Mediator functions as a bridge to convey information from gene-specific regulatory proteins to the basal RNA polymerase II transcription machinery. Mediator is recruited to promoters by direct interactions with regulatory proteins and serves as a scaffold for the assembly of a functional preinitiation complex with RNA polymerase II and the general transcription factors. The sequence is that of Mediator of RNA polymerase II transcription subunit 7-B (med7-b) from Xenopus laevis (African clawed frog).